Here is a 344-residue protein sequence, read N- to C-terminus: MTQITLLTPDDWHLHFRDGDMLQETVPATARLFQRAIVMPNLLPPVTDAKLASAYRERILAARPEGSSFEPLMTIFLTNDTSKQDIIDAKAAGVVAAKLYPAGATTNSDAAVKGLDALFPIFETMAEIGMLLLVHGEVTESHIDIFDREALFIERNLSRIVDAFPQLKVVFEHITTKEAAEFVTSASDNVAATITPQHLLLNRNDLLVGGVRPHNFCLPVLKRNIHQEALRAAVATGSSKFFLGTDSAPHEKHRKESACGCAGCYSAWSALELYAQVFDDLGVIEKLEGFASTHGPDFYGLPRNTGTVTLVKESWTVPSEIILPNGNPIVPFFAGEEVNWKVKS.

2 residues coordinate Zn(2+): H13 and H15. Residues 15–17 (HFR) and N41 each bind substrate. The Zn(2+) site is built by K98, H135, and H173. Residue K98 is modified to N6-carboxylysine. H135 lines the substrate pocket. Residue L218 coordinates substrate. Residue D246 participates in Zn(2+) binding. The active site involves D246. 2 residues coordinate substrate: H250 and A262.

This sequence belongs to the metallo-dependent hydrolases superfamily. DHOase family. Class II DHOase subfamily. Homodimer. Zn(2+) serves as cofactor.

It carries out the reaction (S)-dihydroorotate + H2O = N-carbamoyl-L-aspartate + H(+). It functions in the pathway pyrimidine metabolism; UMP biosynthesis via de novo pathway; (S)-dihydroorotate from bicarbonate: step 3/3. Catalyzes the reversible cyclization of carbamoyl aspartate to dihydroorotate. The protein is Dihydroorotase of Shewanella woodyi (strain ATCC 51908 / MS32).